A 483-amino-acid polypeptide reads, in one-letter code: NADH-quinone oxidoreductase subunit N (483 aa).

A run of 13 helical transmembrane segments spans residues 11-31 (ALPEIIILCMAMFVLLLDLFL), 37-57 (SLIYIFTQLGLAAAAVVTACT), 82-100 (LMMYLTTSVMLVYTRQYVS), 110-130 (FALTLFALLGMMIMVSGQHFL), 164-184 (FVLGALSSGMLLYGMSMLYGV), 205-225 (AVLVLGVVFLIAGLGFKLGAV), 239-259 (PTAVTLFIGSVTKLAAFAFMI), 268-288 (VLAIDWQGMLAIMAVLSILIG), 301-321 (MLAYSTISHVGYLLYGFMSAG), 329-349 (MFYIMAYVLMTLGGFGIMLLL), 372-392 (YAFLMLIIMFSMAGVPPTLGF), 406-426 (GFVGLVIFAVVMAAIGGFYYL), and 446-466 (PIDMKVLLSLNALLLLALGMF).

The protein belongs to the complex I subunit 2 family. As to quaternary structure, NDH-1 is composed of 14 different subunits. Subunits NuoA, H, J, K, L, M, N constitute the membrane sector of the complex.

The protein resides in the cell inner membrane. The enzyme catalyses a quinone + NADH + 5 H(+)(in) = a quinol + NAD(+) + 4 H(+)(out). NDH-1 shuttles electrons from NADH, via FMN and iron-sulfur (Fe-S) centers, to quinones in the respiratory chain. The immediate electron acceptor for the enzyme in this species is believed to be ubiquinone. Couples the redox reaction to proton translocation (for every two electrons transferred, four hydrogen ions are translocated across the cytoplasmic membrane), and thus conserves the redox energy in a proton gradient. In Methylovorus glucosotrophus (strain SIP3-4), this protein is NADH-quinone oxidoreductase subunit N.